The sequence spans 200 residues: MSNQTNKAQDNQVEEIVEGELLNENATEATDEASLMDELTQANFRVEELEKALQEAEAKVDAQKDSVIRAAAEVDNIRRRSAMDVEKAHKFALEKFINELLPVLDNMERALQGTDAEAEATKAIYEGVELTAKSFMSTVEKFGLVQVDPQGDTFNPELHQAIGMQPSADFPANTVMMVMQKGYTLNERLLRPAMVMVSQG.

The span at 1-11 (MSNQTNKAQDN) shows a compositional bias: polar residues. Residues 1 to 25 (MSNQTNKAQDNQVEEIVEGELLNEN) are disordered.

This sequence belongs to the GrpE family. In terms of assembly, homodimer.

It is found in the cytoplasm. Functionally, participates actively in the response to hyperosmotic and heat shock by preventing the aggregation of stress-denatured proteins, in association with DnaK and GrpE. It is the nucleotide exchange factor for DnaK and may function as a thermosensor. Unfolded proteins bind initially to DnaJ; upon interaction with the DnaJ-bound protein, DnaK hydrolyzes its bound ATP, resulting in the formation of a stable complex. GrpE releases ADP from DnaK; ATP binding to DnaK triggers the release of the substrate protein, thus completing the reaction cycle. Several rounds of ATP-dependent interactions between DnaJ, DnaK and GrpE are required for fully efficient folding. The sequence is that of Protein GrpE from Shewanella pealeana (strain ATCC 700345 / ANG-SQ1).